The chain runs to 1122 residues: Histone deacetylase 5 (1122 aa).

A disordered region spans residues M1–R22. A Glycyl lysine isopeptide (Lys-Gly) (interchain with G-Cter in SUMO2) cross-link involves residue K35. A disordered region spans residues K196–L281. The segment covering D247–A258 has biased composition (basic and acidic residues). At S259 the chain carries Phosphoserine; by AMPK, CaMK1, SIK1 and PKD/PRKD1. A compositionally biased stretch (basic and acidic residues) spans K272 to L281. T292 bears the Phosphothreonine; by PKC mark. Disordered regions lie at residues G302–T343 and M481–S504. Over residues N312–S327 the composition is skewed to low complexity. The segment covering T328 to N340 has biased composition (polar residues). Low complexity predominate over residues S494–S504. S498 carries the phosphoserine; by AMPK, CaMK1, SIK1 and PKD/PRKD1 modification. N6-acetyllysine is present on K533. The disordered stretch occupies residues T536 to G625. The segment covering S581–E621 has biased composition (acidic residues). A phosphoserine mark is found at S611 and S661. The interval G684–Q1028 is histone deacetylase. Zn(2+)-binding residues include C696, C698, H704, and C781. H833 is an active-site residue. A Nuclear export signal motif is present at residues E1081–L1122. The interval E1097–L1122 is disordered. A compositionally biased stretch (basic and acidic residues) spans A1104 to E1113. A Phosphoserine modification is found at S1108.

The protein belongs to the histone deacetylase family. HD type 2 subfamily. Interacts with AHRR, BAHD1, BCOR, HDAC7, HDAC9, CTBP1, MEF2C, NCOR2, NRIP1, PHB2 and a 14-3-3 chaperone protein. Interacts with BCL6, DDIT3/CHOP, GRK5, KDM5B and MYOCD. Interacts with EP300 in the presence of TFAP2C. Interacts with ANKRA2. Interacts with CUL7 (as part of the 3M complex); negatively regulated by ANKRA2. Interacts with ZBTB7B; the interaction allows the recruitment of HDAC4 on CD8 loci for deacetylation and possible inhibition of CD8 genes expression. Interacts with RARA. Phosphorylated by AMPK, CaMK1, SIK1 and PRKD1 at Ser-259 and Ser-498. The phosphorylation is required for the export to the cytoplasm and inhibition. Phosphorylated by the PKC kinases PKN1 and PKN2, impairing nuclear import. Phosphorylated by GRK5, leading to nuclear export of HDAC5 and allowing MEF2-mediated transcription. In terms of processing, ubiquitinated. Polyubiquitination however does not lead to its degradation.

It localises to the nucleus. It is found in the cytoplasm. It carries out the reaction N(6)-acetyl-L-lysyl-[histone] + H2O = L-lysyl-[histone] + acetate. Functionally, responsible for the deacetylation of lysine residues on the N-terminal part of the core histones (H2A, H2B, H3 and H4). Histone deacetylation gives a tag for epigenetic repression and plays an important role in transcriptional regulation, cell cycle progression and developmental events. Histone deacetylases act via the formation of large multiprotein complexes. Involved in muscle maturation by repressing transcription of myocyte enhancer MEF2C. During muscle differentiation, it shuttles into the cytoplasm, allowing the expression of myocyte enhancer factors. Serves as a corepressor of RARA and causes its deacetylation. In association with RARA, plays a role in the repression of microRNA-10a and thereby in the inflammatory response. The chain is Histone deacetylase 5 (HDAC5) from Pongo abelii (Sumatran orangutan).